Reading from the N-terminus, the 128-residue chain is Large ribosomal subunit protein uL22 (128 aa).

This sequence belongs to the universal ribosomal protein uL22 family. As to quaternary structure, part of the 50S ribosomal subunit.

In terms of biological role, this protein binds specifically to 23S rRNA; its binding is stimulated by other ribosomal proteins, e.g. L4, L17, and L20. It is important during the early stages of 50S assembly. It makes multiple contacts with different domains of the 23S rRNA in the assembled 50S subunit and ribosome. The globular domain of the protein is located near the polypeptide exit tunnel on the outside of the subunit, while an extended beta-hairpin is found that lines the wall of the exit tunnel in the center of the 70S ribosome. This is Large ribosomal subunit protein uL22 from Rhodopseudomonas palustris (strain HaA2).